The following is a 267-amino-acid chain: Hydroxyethylthiazole kinase (267 aa).

Met46 provides a ligand contact to substrate. The ATP site is built by Arg122 and Ser168. Gly195 contributes to the substrate binding site.

Belongs to the Thz kinase family. Mg(2+) is required as a cofactor.

The catalysed reaction is 5-(2-hydroxyethyl)-4-methylthiazole + ATP = 4-methyl-5-(2-phosphooxyethyl)-thiazole + ADP + H(+). Its pathway is cofactor biosynthesis; thiamine diphosphate biosynthesis; 4-methyl-5-(2-phosphoethyl)-thiazole from 5-(2-hydroxyethyl)-4-methylthiazole: step 1/1. In terms of biological role, catalyzes the phosphorylation of the hydroxyl group of 4-methyl-5-beta-hydroxyethylthiazole (THZ). This is Hydroxyethylthiazole kinase from Nitratidesulfovibrio vulgaris (strain DP4) (Desulfovibrio vulgaris).